The primary structure comprises 249 residues: Vesicle-associated membrane protein-associated protein A (249 aa).

At Ala-2 the chain carries N-acetylalanine. Residues 2-227 (ASASGAMAKH…ASFRDNVTSP (226 aa)) lie on the Cytoplasmic side of the membrane. Residues 14–131 (ILVLDPPTDL…MDSKLRCVFE (118 aa)) enclose the MSP domain. Positions 50–53 (KVKT) are phosphorylated FFAT motif binding. Position 125 is an N6-acetyllysine (Lys-125). Residues 135-144 (ENDKLNDMEP) show a composition bias toward basic and acidic residues. Positions 135 to 167 (ENDKLNDMEPSKAVPLNASKQDGPMPKPHSVSL) are disordered. Phosphoserine is present on Ser-166. The stretch at 169–205 (DTETRKLMEECKRLQGEMMKLSEENRHLRDEGLRLRK) forms a coiled coil. A Phosphothreonine modification is found at Thr-170. Phosphoserine is present on residues Ser-214, Ser-216, and Ser-219. A helical; Anchor for type IV membrane protein membrane pass occupies residues 228–248 (LPSLLVVIAAIFIGFFLGKFI).

This sequence belongs to the VAMP-associated protein (VAP) (TC 9.B.17) family. In terms of assembly, homodimer; disulfide-linked. Heterodimer with VAPB. Interacts with VAMP1, VAMP2, STX1A, BET1, SEC22C and with the C-terminal domain of OCLN. Interacts (via MSP domain) with OSBPL1A (via FFAT motif). Interacts (via MSP domain) with ZFYVE27; may retain ZFYVE27 in the endoplasmic reticulum and regulate its function in cell projections formation. Interacts with OSBP. Interacts (via C-terminus) with RSAD2/viperin (via C-terminus). Interacts with IFITM3. Interacts with OSBPL3 (phosphorylated form). Interacts with KIF5A in a ZFYVE27-dependent manner. Interacts (via MSP domain) with STARD3 (via phosphorylated FFAT motif); this interaction recruits VAPA to the endosome. Interacts with STARD3NL (via FFAT motif). Interacts with CERT1. Interacts with PLEKHA3 and SACM1L to form a ternary complex. Interacts with VPS13A (via FFAT motif). Interacts with RB1CC1 (via phosphorylated FFAT motif), MIGA2 (via phosphorylated FFAT motif), RMDN3 (via phosphorylated FFAT motif), KCNB1 (via phosphorylated FFAT motif) and KCNB2 (via phosphorylated FFAT motif). Interacts (via MSP domain) with WDR44 (via FFAT-like motif); the interactions connect the endoplasmic reticulum (ER) with the endosomal tubule. (Microbial infection) Interacts with HCV protein NS5A and NS5B. Ubiquitous.

It localises to the endoplasmic reticulum membrane. The protein localises to the cell membrane. Its subcellular location is the cell junction. It is found in the tight junction. The protein resides in the nucleus membrane. Endoplasmic reticulum (ER)-anchored protein that mediates the formation of contact sites between the ER and endosomes via interaction with FFAT motif-containing proteins such as STARD3 or WDR44. STARD3-VAPA interaction enables cholesterol transfer from the ER to endosomes. Via interaction with WDR44 participates in neosynthesized protein export. In addition, recruited to the plasma membrane through OSBPL3 binding. The OSBPL3-VAPA complex stimulates RRAS signaling which in turn attenuates integrin beta-1 (ITGB1) activation at the cell surface. With OSBPL3, may regulate ER morphology. May play a role in vesicle trafficking. This chain is Vesicle-associated membrane protein-associated protein A, found in Homo sapiens (Human).